The following is a 156-amino-acid chain: Endoribonuclease YbeY (156 aa).

Zn(2+)-binding residues include histidine 105, histidine 109, and aspartate 115.

It belongs to the endoribonuclease YbeY family. The cofactor is Zn(2+).

Its subcellular location is the cytoplasm. Single strand-specific metallo-endoribonuclease involved in late-stage 70S ribosome quality control and in maturation of the 3' terminus of the 16S rRNA. This is Endoribonuclease YbeY from Chlorobium chlorochromatii (strain CaD3).